A 210-amino-acid chain; its full sequence is Orotate phosphoribosyltransferase (210 aa).

Lys26 is a binding site for 5-phospho-alpha-D-ribose 1-diphosphate. Residue 34 to 35 (FF) coordinates orotate. Residues 72 to 73 (YK), Arg98, Lys99, Lys102, His104, and 123 to 131 (DDVITAGTA) contribute to the 5-phospho-alpha-D-ribose 1-diphosphate site. Orotate-binding residues include Thr127 and Arg155.

It belongs to the purine/pyrimidine phosphoribosyltransferase family. PyrE subfamily. Homodimer. It depends on Mg(2+) as a cofactor.

The enzyme catalyses orotidine 5'-phosphate + diphosphate = orotate + 5-phospho-alpha-D-ribose 1-diphosphate. The protein operates within pyrimidine metabolism; UMP biosynthesis via de novo pathway; UMP from orotate: step 1/2. Its function is as follows. Catalyzes the transfer of a ribosyl phosphate group from 5-phosphoribose 1-diphosphate to orotate, leading to the formation of orotidine monophosphate (OMP). The sequence is that of Orotate phosphoribosyltransferase from Legionella pneumophila (strain Paris).